A 445-amino-acid chain; its full sequence is Probable glycine dehydrogenase (decarboxylating) subunit 1 (445 aa).

This sequence belongs to the GcvP family. N-terminal subunit subfamily. As to quaternary structure, the glycine cleavage system is composed of four proteins: P, T, L and H. In this organism, the P 'protein' is a heterodimer of two subunits.

The catalysed reaction is N(6)-[(R)-lipoyl]-L-lysyl-[glycine-cleavage complex H protein] + glycine + H(+) = N(6)-[(R)-S(8)-aminomethyldihydrolipoyl]-L-lysyl-[glycine-cleavage complex H protein] + CO2. Functionally, the glycine cleavage system catalyzes the degradation of glycine. The P protein binds the alpha-amino group of glycine through its pyridoxal phosphate cofactor; CO(2) is released and the remaining methylamine moiety is then transferred to the lipoamide cofactor of the H protein. The sequence is that of Probable glycine dehydrogenase (decarboxylating) subunit 1 from Anaeromyxobacter dehalogenans (strain 2CP-1 / ATCC BAA-258).